Consider the following 448-residue polypeptide: Phosphoglucosamine mutase (448 aa).

Ser-100 serves as the catalytic Phosphoserine intermediate. Mg(2+) contacts are provided by Ser-100, Asp-240, Asp-242, and Asp-244. At Ser-100 the chain carries Phosphoserine.

It belongs to the phosphohexose mutase family. Mg(2+) serves as cofactor. Activated by phosphorylation.

It catalyses the reaction alpha-D-glucosamine 1-phosphate = D-glucosamine 6-phosphate. Its function is as follows. Catalyzes the conversion of glucosamine-6-phosphate to glucosamine-1-phosphate. The sequence is that of Phosphoglucosamine mutase from Bacillus licheniformis (strain ATCC 14580 / DSM 13 / JCM 2505 / CCUG 7422 / NBRC 12200 / NCIMB 9375 / NCTC 10341 / NRRL NRS-1264 / Gibson 46).